Reading from the N-terminus, the 859-residue chain is Volume-regulated anion channel subunit LRRC8D (859 aa).

Residues 1–22 (MFTLAEVASLNDIQPTYRILKP) lie on the Cytoplasmic side of the membrane. A helical transmembrane segment spans residues 23 to 48 (WWDVFMDYLAVVMLMVAIFAGTMQLT). Topologically, residues 49–164 (KDQVVCLPVL…YHLALPWYSK (116 aa)) are extracellular. C54 and C355 form a disulfide bridge. The interval 110–138 (IPLQATHPHAESTLPNQEAKKEKRDPTGR) is disordered. Residues 127-138 (EAKKEKRDPTGR) are compositionally biased toward basic and acidic residues. Residues 165–183 (YFPYLALIHTIILMVSSNF) traverse the membrane as a helical segment. The Cytoplasmic portion of the chain corresponds to 184–309 (WFKYPKTCSK…EDSDLIYKLY (126 aa)). A disordered region spans residues 222-252 (SEENKQRITGAQTLPKHVSTSSDEGSPSAST). Polar residues predominate over residues 228 to 252 (RITGAQTLPKHVSTSSDEGSPSAST). Residues S242, S243, and S247 each carry the phosphoserine modification. Residues 310 to 331 (VVQTLIKTAKFIFILCYTANFV) form a helical membrane-spanning segment. The Extracellular portion of the chain corresponds to 332-361 (NAISFEHVCKPKVEHLTGYEVFECTHNMAY). A helical transmembrane segment spans residues 362 to 387 (MLKKLLISYISIICVYGFICLYTLFW). At 388 to 859 (LFRIPLKEYS…DVNVPFANGI (472 aa)) the chain is on the cytoplasmic side. LRR repeat units lie at residues 515-535 (NLQELHLCHCPAKVEQTAFSF), 539-560 (HLRCLHVKFTDVAEIPAWVYLL), 562-583 (NLRELYLIGNLNSENNKMIGLE), 590-610 (HLKILHVKSNLTKVPSNITDV), 613-633 (HLTKLVIHNDGTKLLVLNSLK), 637-658 (NVAELELQNCELERIPHAIFSL), 660-681 (NLQELDLKSNNIRTIEEIISFQ), 685-706 (RLTCLKLWHNKIVAIPPSITHV), 708-729 (NLESLYFSNNKLESLPTAVFSL), 731-752 (KLRCLDVSYNNISTIPIEIGLL), 754-775 (NLQHLHITGNKVDILPKQLFKC), 777-798 (KLRTLNLGQNCIASLPEKISQL), and 800-821 (QLTQLELKGNCLDRLPAQLGQC).

Belongs to the LRRC8 family. Heterohexamer; oligomerizes with other LRRC8 proteins (LRRC8A, LRRC8B, LRRC8C and/or LRRC8E) to form a heterohexamer. In vivo, the subunit composition may depend primarily on expression levels, and heterooligomeric channels containing various proportions of the different LRRC8 proteins may coexist. Expressed in pancreatic beta cells. Also expressed in glucagon-secreting pancreatic alpha cells.

It localises to the cell membrane. It is found in the endoplasmic reticulum membrane. The enzyme catalyses chloride(in) = chloride(out). It catalyses the reaction iodide(out) = iodide(in). It carries out the reaction taurine(out) = taurine(in). Its function is as follows. Non-essential component of the volume-regulated anion channel (VRAC, also named VSOAC channel), an anion channel required to maintain a constant cell volume in response to extracellular or intracellular osmotic changes. The VRAC channel conducts iodide better than chloride and can also conduct organic osmolytes like taurine. Plays a redundant role in the efflux of amino acids, such as aspartate, in response to osmotic stress family member (LRRC8B, LRRC8C, LRRC8D or LRRC8E); channel characteristics depend on the precise subunit composition. Also acts as a regulator of glucose-sensing in pancreatic beta cells: VRAC currents, generated in response to hypotonicity- or glucose-induced beta cell swelling, depolarize cells, thereby causing electrical excitation, leading to increase glucose sensitivity and insulin secretion. VRAC channels containing LRRC8D inhibit transport of immunoreactive cyclic dinucleotide GMP-AMP (2'-3'-cGAMP), an immune messenger produced in response to DNA virus in the cytosol. The polypeptide is Volume-regulated anion channel subunit LRRC8D (Mus musculus (Mouse)).